The chain runs to 1196 residues: DNA-directed RNA polymerase subunit beta (1196 aa).

The protein belongs to the RNA polymerase beta chain family. As to quaternary structure, the RNAP catalytic core consists of 2 alpha, 1 beta, 1 beta' and 1 omega subunit. When a sigma factor is associated with the core the holoenzyme is formed, which can initiate transcription.

The catalysed reaction is RNA(n) + a ribonucleoside 5'-triphosphate = RNA(n+1) + diphosphate. Functionally, DNA-dependent RNA polymerase catalyzes the transcription of DNA into RNA using the four ribonucleoside triphosphates as substrates. This chain is DNA-directed RNA polymerase subunit beta, found in Lactococcus lactis subsp. lactis (strain IL1403) (Streptococcus lactis).